A 239-amino-acid polypeptide reads, in one-letter code: Probable transcriptional regulatory protein BAA_0622 (239 aa).

This sequence belongs to the TACO1 family. YeeN subfamily.

It localises to the cytoplasm. This is Probable transcriptional regulatory protein BAA_0622 from Bacillus anthracis (strain A0248).